The sequence spans 180 residues: Large ribosomal subunit protein uL5 (180 aa).

Belongs to the universal ribosomal protein uL5 family. Part of the 50S ribosomal subunit; part of the 5S rRNA/L5/L18/L25 subcomplex. Contacts the 5S rRNA and the P site tRNA. Forms a bridge to the 30S subunit in the 70S ribosome.

In terms of biological role, this is one of the proteins that bind and probably mediate the attachment of the 5S RNA into the large ribosomal subunit, where it forms part of the central protuberance. In the 70S ribosome it contacts protein S13 of the 30S subunit (bridge B1b), connecting the 2 subunits; this bridge is implicated in subunit movement. Contacts the P site tRNA; the 5S rRNA and some of its associated proteins might help stabilize positioning of ribosome-bound tRNAs. This is Large ribosomal subunit protein uL5 from Roseiflexus castenholzii (strain DSM 13941 / HLO8).